We begin with the raw amino-acid sequence, 330 residues long: Methionyl-tRNA formyltransferase (330 aa).

121-124 contributes to the (6S)-5,6,7,8-tetrahydrofolate binding site; sequence SLLP.

The protein belongs to the Fmt family.

It carries out the reaction L-methionyl-tRNA(fMet) + (6R)-10-formyltetrahydrofolate = N-formyl-L-methionyl-tRNA(fMet) + (6S)-5,6,7,8-tetrahydrofolate + H(+). Its function is as follows. Attaches a formyl group to the free amino group of methionyl-tRNA(fMet). The formyl group appears to play a dual role in the initiator identity of N-formylmethionyl-tRNA by promoting its recognition by IF2 and preventing the misappropriation of this tRNA by the elongation apparatus. The chain is Methionyl-tRNA formyltransferase from Burkholderia orbicola (strain MC0-3).